We begin with the raw amino-acid sequence, 108 residues long: Thiosulfate sulfurtransferase GlpE (108 aa).

The region spanning Gln18–Leu106 is the Rhodanese domain. Cys66 serves as the catalytic Cysteine persulfide intermediate.

The protein belongs to the GlpE family.

The protein localises to the cytoplasm. It catalyses the reaction thiosulfate + hydrogen cyanide = thiocyanate + sulfite + 2 H(+). The enzyme catalyses thiosulfate + [thioredoxin]-dithiol = [thioredoxin]-disulfide + hydrogen sulfide + sulfite + 2 H(+). Its function is as follows. Transferase that catalyzes the transfer of sulfur from thiosulfate to thiophilic acceptors such as cyanide or dithiols. May function in a CysM-independent thiosulfate assimilation pathway by catalyzing the conversion of thiosulfate to sulfite, which can then be used for L-cysteine biosynthesis. In Glaesserella parasuis serovar 5 (strain SH0165) (Haemophilus parasuis), this protein is Thiosulfate sulfurtransferase GlpE.